The sequence spans 276 residues: Malectin-A (276 aa).

The first 26 residues, 1–26, serve as a signal peptide directing secretion; that stretch reads MLSIRTVLGPLATILLTVLGPFGAHG. Residues 27 to 253 are Lumenal-facing; that stretch reads SGLADKVIWA…TPNPYASDNS (227 aa). Positions 67, 89, 116, 117, and 186 each coordinate a carbohydrate. The segment at 204–247 is disordered; it reads PMLQPHPGLEKKEEEEEEEEEEGSTSKKQINKNRVQSGPRTPNP. The segment covering 216-226 has biased composition (acidic residues); sequence EEEEEEEEEEG. Over residues 229–247 the composition is skewed to polar residues; the sequence is SKKQINKNRVQSGPRTPNP. Residue Asn-252 is glycosylated (N-linked (GlcNAc...) asparagine). The helical transmembrane segment at 254-274 threads the bilayer; that stretch reads SLMFPILVAFGVFIPTLFCLC. The Cytoplasmic segment spans residues 275-276; that stretch reads RL.

The protein belongs to the malectin family. Widely expressed throughout development including the anterior neuroectoderm and neural crest at stages 18 and 20, and the retina, hatching gland, otic vesicle, epibranchial placodes, pronephros and tail tip of later states. At stage 41, expressed in the liver, pancreas, branchial arches and proctodeum. Expressed broadly in adults in fat, intestine, gall bladder, eye, muscle, kidney, stomach, liver, heart, pancreas and lung.

It localises to the endoplasmic reticulum membrane. Its function is as follows. Carbohydrate-binding protein with a strong ligand preference for Glc2-N-glycan. May play a role in the early steps of protein N-glycosylation. Can bind di- or higher oligomers but not monomers of glucose, including maltose, maltotriose, maltotetraose, maltoheptaose, nigerose, kojibose, cellobiose and isomaltose, although based on their subcellular locations, these are unlikely to all be physiological ligands. The polypeptide is Malectin-A (Xenopus laevis (African clawed frog)).